We begin with the raw amino-acid sequence, 559 residues long: DNA primase (559 aa).

A CHC2-type zinc finger spans residues 37-61; the sequence is CPFHEERSASFSVNQVKGFYYCFGC. Residues 246-327 form the Toprim domain; the sequence is KQVIVTEGYL…KGGVILFENN (82 aa). 3 residues coordinate Mg(2+): Glu252, Asp296, and Asp298.

It belongs to the DnaG primase family. As to quaternary structure, monomer. Interacts with DnaB. It depends on Zn(2+) as a cofactor. Requires Mg(2+) as cofactor.

The catalysed reaction is ssDNA + n NTP = ssDNA/pppN(pN)n-1 hybrid + (n-1) diphosphate.. Functionally, RNA polymerase that catalyzes the synthesis of short RNA molecules used as primers for DNA polymerase during DNA replication. In Helicobacter pylori (strain J99 / ATCC 700824) (Campylobacter pylori J99), this protein is DNA primase.